The primary structure comprises 345 residues: Ferritin-like-encapsulin shell fusion protein (345 aa).

The ferritin-like domain stretch occupies residues 1–109 (MLSINPTLIN…INDNKKEESN (109 aa)). The Fe cation site is built by Glu-31, Glu-61, and His-64. The interval 110–345 (VEYFEKLRSA…KNPEAIVVLE (236 aa)) is encapsulin domain.

This sequence in the N-terminal section; belongs to the ferritin-like superfamily. The protein in the C-terminal section; belongs to the encapsulin family. Family 1 subfamily. As to quaternary structure, 180 monomers assemble into 12 pentamers and 20 hexamers which further assemble into an icosahedral particle about 36.6 nm in diameter. The N-terminal domain (residues 1-99) crystallizes as 3 decamers.

The protein resides in the encapsulin nanocompartment. The catalysed reaction is 4 Fe(2+) + O2 + 4 H(+) = 4 Fe(3+) + 2 H2O. With respect to regulation, the ferroxidase activity is inhibited by zinc. Functionally, fusion of the shell and cargo protein of a type 1 encapsulin nanocompartment. The nanocompartment is probably involved in iron storage. Expression in E.coli generates spherical particles (PfSPs) about 30 nm in diameter. The purified N-terminus has ferroxidase activity. This is Ferritin-like-encapsulin shell fusion protein from Pyrococcus furiosus (strain ATCC 43587 / DSM 3638 / JCM 8422 / Vc1).